We begin with the raw amino-acid sequence, 473 residues long: Probable lipid II flippase MurJ (473 aa).

13 consecutive transmembrane segments (helical) span residues 31-51 (TFGA…PFFL), 90-110 (LVTL…ASIF), 125-145 (LIRL…FYSV), 153-173 (FLPA…CLFG), 177-197 (WAAA…LPFG), 215-235 (FFGT…DVNV), 253-273 (LYQL…LSTL), 300-320 (IGLM…GAFT), 327-347 (SAQI…FNLL), 360-380 (PFFA…ILGF), 382-402 (MGAS…FVFL), 414-434 (IFKI…LRGS), and 439-459 (LGTI…SKLL).

It belongs to the MurJ/MviN family.

It localises to the cell inner membrane. Its pathway is cell wall biogenesis; peptidoglycan biosynthesis. Its function is as follows. Involved in peptidoglycan biosynthesis. Transports lipid-linked peptidoglycan precursors from the inner to the outer leaflet of the cytoplasmic membrane. This Thermotoga maritima (strain ATCC 43589 / DSM 3109 / JCM 10099 / NBRC 100826 / MSB8) protein is Probable lipid II flippase MurJ.